Reading from the N-terminus, the 294-residue chain is 4-diphosphocytidyl-2-C-methyl-D-erythritol kinase (294 aa).

Lys15 is a catalytic residue. 101–111 (PSEAGLGGGSS) provides a ligand contact to ATP. Residue Asp143 is part of the active site.

It belongs to the GHMP kinase family. IspE subfamily.

It carries out the reaction 4-CDP-2-C-methyl-D-erythritol + ATP = 4-CDP-2-C-methyl-D-erythritol 2-phosphate + ADP + H(+). It participates in isoprenoid biosynthesis; isopentenyl diphosphate biosynthesis via DXP pathway; isopentenyl diphosphate from 1-deoxy-D-xylulose 5-phosphate: step 3/6. Catalyzes the phosphorylation of the position 2 hydroxy group of 4-diphosphocytidyl-2C-methyl-D-erythritol. In Fusobacterium nucleatum subsp. nucleatum (strain ATCC 25586 / DSM 15643 / BCRC 10681 / CIP 101130 / JCM 8532 / KCTC 2640 / LMG 13131 / VPI 4355), this protein is 4-diphosphocytidyl-2-C-methyl-D-erythritol kinase.